A 123-amino-acid chain; its full sequence is Integration host factor subunit alpha (123 aa).

Positions 97-123 (NANGSAPSMSSSASAVDDDKSESASRT) are disordered. Residues 98 to 111 (ANGSAPSMSSSASA) show a composition bias toward low complexity. Residues 113 to 123 (DDDKSESASRT) are compositionally biased toward basic and acidic residues.

Belongs to the bacterial histone-like protein family. Heterodimer of an alpha and a beta chain.

Its function is as follows. This protein is one of the two subunits of integration host factor, a specific DNA-binding protein that functions in genetic recombination as well as in transcriptional and translational control. This Rhodopseudomonas palustris (strain BisB5) protein is Integration host factor subunit alpha.